The chain runs to 383 residues: GTP-binding protein 10 homolog (383 aa).

Residues 22–157 (PSFLDTLRLA…RIVNLDLKLI (136 aa)) enclose the Obg domain. The OBG-type G domain occupies 158–353 (ADVGLVGFPN…VKSQLRRTLV (196 aa)). Residues 164–171 (GFPNAGKS), 211–215 (DLPGL), and 287–290 (NKMD) each bind GTP.

The protein belongs to the TRAFAC class OBG-HflX-like GTPase superfamily. OBG GTPase family.

The protein localises to the nucleus. It localises to the nucleolus. In terms of biological role, may be involved in the ribosome maturation process. This Drosophila pseudoobscura pseudoobscura (Fruit fly) protein is GTP-binding protein 10 homolog.